Consider the following 220-residue polypeptide: Large ribosomal subunit protein uL3 (220 aa).

Residues 145-169 (GPASHGSKFHRRPGSSGNRTWPGRV) are disordered.

Belongs to the universal ribosomal protein uL3 family. As to quaternary structure, part of the 50S ribosomal subunit. Forms a cluster with proteins L14 and L19.

Functionally, one of the primary rRNA binding proteins, it binds directly near the 3'-end of the 23S rRNA, where it nucleates assembly of the 50S subunit. The polypeptide is Large ribosomal subunit protein uL3 (Bdellovibrio bacteriovorus (strain ATCC 15356 / DSM 50701 / NCIMB 9529 / HD100)).